The chain runs to 210 residues: Protein-L-isoaspartate O-methyltransferase (210 aa).

Ser54 is a catalytic residue.

Belongs to the methyltransferase superfamily. L-isoaspartyl/D-aspartyl protein methyltransferase family.

It localises to the cytoplasm. It carries out the reaction [protein]-L-isoaspartate + S-adenosyl-L-methionine = [protein]-L-isoaspartate alpha-methyl ester + S-adenosyl-L-homocysteine. Catalyzes the methyl esterification of L-isoaspartyl residues in peptides and proteins that result from spontaneous decomposition of normal L-aspartyl and L-asparaginyl residues. It plays a role in the repair and/or degradation of damaged proteins. The polypeptide is Protein-L-isoaspartate O-methyltransferase (Methanothrix thermoacetophila (strain DSM 6194 / JCM 14653 / NBRC 101360 / PT) (Methanosaeta thermophila)).